The chain runs to 294 residues: MEFWGVEVKNGKPLHLDPGLDRLVHISQVALGESKNNVTEPIQLYVTVGSDKLLIGTLSHEKFPQLSTEIVLERNFALSHTWKNGSVFFSGYKVDASDPEPEDLIDDQLEAAGFKAAPKSAAKQVNFQLPNEDVKAKQDDDADGSEEDSSDDDDSENSGDEEEEKVTAESDSEEDDSSDDEEDDSSEEETPKKPEEPKKRSAEPNSSKNPASNKKAKFVTPQKTDSKKPHVHVATPHPSKQAGKNSGGGSTGETSKQQQTPKSAGAFGCKSCTRTFTSEMGLQSHTKAKHSAAA.

At Met-1 the chain carries N-acetylmethionine. Residues 2–5 (EFWG) are required to repress transcription. A disordered region spans residues 124–269 (QVNFQLPNED…TPKSAGAFGC (146 aa)). Residues 140–188 (DDADGSEEDSSDDDDSENSGDEEEEKVTAESDSEEDDSSDDEEDDSSEE) show a composition bias toward acidic residues. Residues 189–202 (ETPKKPEEPKKRSA) are compositionally biased toward basic and acidic residues. Over residues 203–213 (EPNSSKNPASN) the composition is skewed to low complexity. The segment covering 252–262 (GETSKQQQTPK) has biased composition (polar residues). The C2H2-type zinc-finger motif lies at 267-290 (FGCKSCTRTFTSEMGLQSHTKAKH).

Belongs to the histone deacetylase HD2 family. As to quaternary structure, interacts with DNMT2. In terms of tissue distribution, expressed in leaves, roots, stems, young plantlets, flowers and siliques. Highest levels in ovules, embryos, shoot apical meristems and first leaves. Also expressed in somatic embryos.

It is found in the nucleus. Its subcellular location is the nucleolus. Its function is as follows. Probably mediates the deacetylation of lysine residues on the N-terminal part of the core histones (H2A, H2B, H3 and H4). Histone deacetylation gives a tag for epigenetic repression and plays an important role in transcriptional regulation, cell cycle progression and developmental events. Involved in the modulation of abscisic acid and stress-responsive genes. In Arabidopsis thaliana (Mouse-ear cress), this protein is Histone deacetylase HDT3 (HDT3).